Consider the following 263-residue polypeptide: Polyamine aminopropyltransferase (263 aa).

Residues methionine 1–lysine 221 form the PABS domain. S-methyl-5'-thioadenosine is bound by residues aspartate 98 and aspartate 126–glycine 127. Catalysis depends on aspartate 144, which acts as the Proton acceptor.

The protein belongs to the spermidine/spermine synthase family. As to quaternary structure, homodimer or homotetramer.

Its subcellular location is the cytoplasm. The catalysed reaction is S-adenosyl 3-(methylsulfanyl)propylamine + putrescine = S-methyl-5'-thioadenosine + spermidine + H(+). It functions in the pathway amine and polyamine biosynthesis; spermidine biosynthesis; spermidine from putrescine: step 1/1. Functionally, catalyzes the irreversible transfer of a propylamine group from the amino donor S-adenosylmethioninamine (decarboxy-AdoMet) to putrescine (1,4-diaminobutane) to yield spermidine. The protein is Polyamine aminopropyltransferase of Neisseria meningitidis serogroup A / serotype 4A (strain DSM 15465 / Z2491).